The primary structure comprises 860 residues: Leucine--tRNA ligase (860 aa).

The short motif at 42–52 (PYPSGRLHMGH) is the 'HIGH' region element. Residues 619-623 (KMSKS) carry the 'KMSKS' region motif. Residue Lys622 participates in ATP binding.

The protein belongs to the class-I aminoacyl-tRNA synthetase family.

It is found in the cytoplasm. It catalyses the reaction tRNA(Leu) + L-leucine + ATP = L-leucyl-tRNA(Leu) + AMP + diphosphate. The protein is Leucine--tRNA ligase of Salmonella choleraesuis (strain SC-B67).